The primary structure comprises 181 residues: Probable RNA 2'-phosphotransferase (181 aa).

The protein belongs to the KptA/TPT1 family.

Functionally, removes the 2'-phosphate from RNA via an intermediate in which the phosphate is ADP-ribosylated by NAD followed by a presumed transesterification to release the RNA and generate ADP-ribose 1''-2''-cyclic phosphate (APPR&gt;P). May function as an ADP-ribosylase. This Acaryochloris marina (strain MBIC 11017) protein is Probable RNA 2'-phosphotransferase.